The primary structure comprises 21 residues: SALAINQPNYSVLKELGLNED.

The protein belongs to the aldehyde dehydrogenase family. As to quaternary structure, homotetramer.

The enzyme catalyses (S)-2-amino-6-oxohexanoate + NADP(+) + H2O = L-2-aminoadipate + NADPH + 2 H(+). It carries out the reaction (S)-2-amino-6-oxohexanoate + NAD(+) + H2O = L-2-aminoadipate + NADH + 2 H(+). The sequence is that of Alpha-aminoadipic semialdehyde dehydrogenase (aldh7a1) from Ctenopharyngodon idella (Grass carp).